Consider the following 363-residue polypeptide: Anhydro-N-acetylmuramic acid kinase (363 aa).

10–17 (GTSLDGLD) contacts ATP.

Belongs to the anhydro-N-acetylmuramic acid kinase family.

The catalysed reaction is 1,6-anhydro-N-acetyl-beta-muramate + ATP + H2O = N-acetyl-D-muramate 6-phosphate + ADP + H(+). Its pathway is amino-sugar metabolism; 1,6-anhydro-N-acetylmuramate degradation. It participates in cell wall biogenesis; peptidoglycan recycling. Its function is as follows. Catalyzes the specific phosphorylation of 1,6-anhydro-N-acetylmuramic acid (anhMurNAc) with the simultaneous cleavage of the 1,6-anhydro ring, generating MurNAc-6-P. Is required for the utilization of anhMurNAc either imported from the medium or derived from its own cell wall murein, and thus plays a role in cell wall recycling. The chain is Anhydro-N-acetylmuramic acid kinase from Pseudomonas fluorescens (strain Pf0-1).